The primary structure comprises 121 residues: Aspartate 1-decarboxylase (121 aa).

The Schiff-base intermediate with substrate; via pyruvic acid role is filled by Ser25. Residue Ser25 is modified to Pyruvic acid (Ser). Position 57 (Thr57) interacts with substrate. The Proton donor role is filled by Tyr58. Residue 73-75 coordinates substrate; the sequence is GAA.

Belongs to the PanD family. As to quaternary structure, heterooctamer of four alpha and four beta subunits. It depends on pyruvate as a cofactor. Is synthesized initially as an inactive proenzyme, which is activated by self-cleavage at a specific serine bond to produce a beta-subunit with a hydroxyl group at its C-terminus and an alpha-subunit with a pyruvoyl group at its N-terminus.

The protein localises to the cytoplasm. It catalyses the reaction L-aspartate + H(+) = beta-alanine + CO2. It functions in the pathway cofactor biosynthesis; (R)-pantothenate biosynthesis; beta-alanine from L-aspartate: step 1/1. In terms of biological role, catalyzes the pyruvoyl-dependent decarboxylation of aspartate to produce beta-alanine. This is Aspartate 1-decarboxylase from Sulfurimonas denitrificans (strain ATCC 33889 / DSM 1251) (Thiomicrospira denitrificans (strain ATCC 33889 / DSM 1251)).